Consider the following 95-residue polypeptide: Defensin alpha 4 (95 aa).

The first 19 residues, 1-19 (MRTLALLAAILLVALQAQA), serve as a signal peptide directing secretion. Positions 20–62 (EHISVSIDEVVDQQPPQAEDQDVAIYVKEHESSALEALGVKAG) are excised as a propeptide. Cystine bridges form between Cys-65–Cys-93, Cys-67–Cys-82, and Cys-72–Cys-92.

Belongs to the alpha-defensin family.

It is found in the secreted. In terms of biological role, host-defense peptide that has antimicrobial activity. Inhibits corticotropin (ACTH)-stimulated corticosterone production (in vitro). This chain is Defensin alpha 4, found in Oryctolagus cuniculus (Rabbit).